The following is a 378-amino-acid chain: Homoserine O-acetyltransferase (378 aa).

The region spanning 52–337 is the AB hydrolase-1 domain; the sequence is NAILICHALT…YSQHGHDTFL (286 aa). Ser-148 (nucleophile) is an active-site residue. A substrate-binding site is contributed by Arg-217. Active-site residues include Asp-304 and His-333. Asp-334 serves as a coordination point for substrate.

This sequence belongs to the AB hydrolase superfamily. MetX family. Homodimer.

Its subcellular location is the cytoplasm. It catalyses the reaction L-homoserine + acetyl-CoA = O-acetyl-L-homoserine + CoA. Its pathway is amino-acid biosynthesis; L-methionine biosynthesis via de novo pathway; O-acetyl-L-homoserine from L-homoserine: step 1/1. In terms of biological role, transfers an acetyl group from acetyl-CoA to L-homoserine, forming acetyl-L-homoserine. The chain is Homoserine O-acetyltransferase from Chloroherpeton thalassium (strain ATCC 35110 / GB-78).